A 625-amino-acid polypeptide reads, in one-letter code: Voltage-gated potassium channel KCNC4 (625 aa).

Disordered stretches follow at residues Met-1–Cys-24 and Leu-65–Ser-86. The interval Met-1–Glu-28 is inactivation gate. The Cytoplasmic segment spans residues Met-1–Arg-227. A phosphoserine mark is found at Ser-8, Ser-9, Ser-15, and Ser-21. Gly residues predominate over residues Asp-77 to Ser-86. His-117, Cys-123, Cys-144, and Cys-145 together coordinate Zn(2+). A helical membrane pass occupies residues Val-228–Thr-248. N-linked (GlcNAc...) asparagine glycosylation is found at Asn-257 and Asn-266. A helical membrane pass occupies residues Glu-279–Val-299. The Cytoplasmic portion of the chain corresponds to Arg-300 to Asn-313. The chain crosses the membrane as a helical span at residues Leu-314–Gly-334. A helical; Voltage-sensor membrane pass occupies residues Phe-346–Phe-365. The Cytoplasmic portion of the chain corresponds to Val-366–Glu-381. The chain crosses the membrane as a helical span at residues Phe-382 to Tyr-402. The K(+) site is built by Thr-437, Leu-438, Gly-439, and Tyr-440. The Selectivity filter signature appears at Thr-437–Asp-442. The chain crosses the membrane as a helical span at residues Val-453–Val-473. At Asn-474–Leu-625 the chain is on the cytoplasmic side. A disordered region spans residues Pro-490 to Arg-581. The span at Ala-528–Gln-543 shows a compositional bias: basic and acidic residues.

It belongs to the potassium channel family. C (Shaw) (TC 1.A.1.2) subfamily. Kv3.4/KCNC4 sub-subfamily. As to quaternary structure, homotetramer. Heterotetramer of potassium channel proteins. Post-translationally, phosphorylation of serine residues in the inactivation gate inhibits rapid channel closure.

The protein localises to the membrane. It carries out the reaction K(+)(in) = K(+)(out). Functionally, voltage-gated potassium channel that opens in response to the voltage difference across the membrane, forming a potassium-selective channel through which potassium ions pass in accordance with their electrochemical gradient. The channel displays rapid activation and inactivation kinetics. The sequence is that of Voltage-gated potassium channel KCNC4 from Rattus norvegicus (Rat).